The primary structure comprises 289 residues: ATP synthase gamma chain (289 aa).

It belongs to the ATPase gamma chain family. F-type ATPases have 2 components, CF(1) - the catalytic core - and CF(0) - the membrane proton channel. CF(1) has five subunits: alpha(3), beta(3), gamma(1), delta(1), epsilon(1). CF(0) has three main subunits: a, b and c.

It localises to the cell membrane. Its function is as follows. Produces ATP from ADP in the presence of a proton gradient across the membrane. The gamma chain is believed to be important in regulating ATPase activity and the flow of protons through the CF(0) complex. This is ATP synthase gamma chain from Hamiltonella defensa subsp. Acyrthosiphon pisum (strain 5AT).